A 429-amino-acid chain; its full sequence is D-amino acid dehydrogenase 1 (429 aa).

Residue 3–17 (VLVLGSGVIGVTSAY) coordinates FAD.

This sequence belongs to the DadA oxidoreductase family. It depends on FAD as a cofactor.

It carries out the reaction a D-alpha-amino acid + A + H2O = a 2-oxocarboxylate + AH2 + NH4(+). Its function is as follows. Oxidative deamination of D-amino acids. The polypeptide is D-amino acid dehydrogenase 1 (dadA1) (Ralstonia nicotianae (strain ATCC BAA-1114 / GMI1000) (Ralstonia solanacearum)).